The primary structure comprises 187 residues: Orotate phosphoribosyltransferase (187 aa).

5-phospho-alpha-D-ribose 1-diphosphate is bound at residue glutamate 110 to serine 118. Orotate is bound by residues threonine 114 and arginine 142.

The protein belongs to the purine/pyrimidine phosphoribosyltransferase family. PyrE subfamily. Homodimer. Mg(2+) is required as a cofactor.

It catalyses the reaction orotidine 5'-phosphate + diphosphate = orotate + 5-phospho-alpha-D-ribose 1-diphosphate. Its pathway is pyrimidine metabolism; UMP biosynthesis via de novo pathway; UMP from orotate: step 1/2. Functionally, catalyzes the transfer of a ribosyl phosphate group from 5-phosphoribose 1-diphosphate to orotate, leading to the formation of orotidine monophosphate (OMP). The polypeptide is Orotate phosphoribosyltransferase (Thermotoga neapolitana (strain ATCC 49049 / DSM 4359 / NBRC 107923 / NS-E)).